We begin with the raw amino-acid sequence, 513 residues long: Light-independent protochlorophyllide reductase subunit B (513 aa).

Position 36 (D36) interacts with [4Fe-4S] cluster. D299 functions as the Proton donor in the catalytic mechanism. 434 to 435 is a binding site for substrate; that stretch reads GM.

Belongs to the ChlB/BchB/BchZ family. In terms of assembly, protochlorophyllide reductase is composed of three subunits; ChlL, ChlN and ChlB. Forms a heterotetramer of two ChlB and two ChlN subunits. [4Fe-4S] cluster serves as cofactor.

The protein localises to the plastid. The protein resides in the chloroplast. It carries out the reaction chlorophyllide a + oxidized 2[4Fe-4S]-[ferredoxin] + 2 ADP + 2 phosphate = protochlorophyllide a + reduced 2[4Fe-4S]-[ferredoxin] + 2 ATP + 2 H2O. It functions in the pathway porphyrin-containing compound metabolism; chlorophyll biosynthesis (light-independent). Its function is as follows. Component of the dark-operative protochlorophyllide reductase (DPOR) that uses Mg-ATP and reduced ferredoxin to reduce ring D of protochlorophyllide (Pchlide) to form chlorophyllide a (Chlide). This reaction is light-independent. The NB-protein (ChlN-ChlB) is the catalytic component of the complex. The polypeptide is Light-independent protochlorophyllide reductase subunit B (Cycas taitungensis (Prince sago)).